The sequence spans 121 residues: Large ribosomal subunit protein bL12 (121 aa).

This sequence belongs to the bacterial ribosomal protein bL12 family. As to quaternary structure, homodimer. Part of the ribosomal stalk of the 50S ribosomal subunit. Forms a multimeric L10(L12)X complex, where L10 forms an elongated spine to which 2 to 4 L12 dimers bind in a sequential fashion. Binds GTP-bound translation factors.

In terms of biological role, forms part of the ribosomal stalk which helps the ribosome interact with GTP-bound translation factors. Is thus essential for accurate translation. This Streptococcus pyogenes serotype M3 (strain ATCC BAA-595 / MGAS315) protein is Large ribosomal subunit protein bL12.